A 163-amino-acid polypeptide reads, in one-letter code: HTH-type transcriptional regulator IscR (163 aa).

The region spanning 2-131 (RLTSKGRYAV…NNITLGELVN (130 aa)) is the HTH rrf2-type domain. The segment at residues 28-51 (LADISERQGISLSYLEQLFSRLRK) is a DNA-binding region (H-T-H motif). Residues cysteine 92, cysteine 98, and cysteine 104 each contribute to the [2Fe-2S] cluster site. Over residues 140 to 149 (DRQHTHDAPR) the composition is skewed to basic and acidic residues. A disordered region spans residues 140–163 (DRQHTHDAPRSTRTQDAIDVKLRA).

[2Fe-2S] cluster is required as a cofactor.

Functionally, regulates the transcription of several operons and genes involved in the biogenesis of Fe-S clusters and Fe-S-containing proteins. This chain is HTH-type transcriptional regulator IscR, found in Citrobacter koseri (strain ATCC BAA-895 / CDC 4225-83 / SGSC4696).